We begin with the raw amino-acid sequence, 630 residues long: tRNA uridine 5-carboxymethylaminomethyl modification enzyme MnmG (630 aa).

Residue 13-18 (GGGHAG) participates in FAD binding. 273–287 (GPRYCPSIEDKVMRF) lines the NAD(+) pocket.

It belongs to the MnmG family. Homodimer. Heterotetramer of two MnmE and two MnmG subunits. FAD serves as cofactor.

The protein resides in the cytoplasm. In terms of biological role, NAD-binding protein involved in the addition of a carboxymethylaminomethyl (cmnm) group at the wobble position (U34) of certain tRNAs, forming tRNA-cmnm(5)s(2)U34. The polypeptide is tRNA uridine 5-carboxymethylaminomethyl modification enzyme MnmG (Actinobacillus pleuropneumoniae serotype 3 (strain JL03)).